The primary structure comprises 285 residues: Putative hydrolase DDAH2 (285 aa).

The active-site Proton donor is the His-171. Catalysis depends on Cys-276, which acts as the Nucleophile.

This sequence belongs to the DDAH family. Post-translationally, phosphorylated by TBK1. Phosphorylation inhibits the translocation into the mitochondrion upon Sendai viral infection. Detected in heart, placenta, lung, liver, skeletal muscle, kidney and pancreas, and at very low levels in brain.

The protein localises to the cytoplasm. It is found in the mitochondrion. In terms of biological role, putative hydrolase with unknown substrate. Does not hydrolyze N(G),N(G)-dimethyl-L-arginine (ADMA) which acts as an inhibitor of NOS. In endothelial cells, induces expression of vascular endothelial growth factor (VEGF) via phosphorylation of the transcription factor SP1 by PKA in a process that is independent of NO and NO synthase. Similarly, enhances pancreatic insulin secretion through SP1-mediated transcriptional up-regulation of secretagogin/SCGN, an insulin vesicle docking protein. Upon viral infection, relocates to mitochondria where it promotes mitochondrial fission through activation of DNM1L leading to the inhibition of innate response activation mediated by MAVS. The protein is Putative hydrolase DDAH2 of Homo sapiens (Human).